Reading from the N-terminus, the 379-residue chain is Cytochrome b (379 aa).

Transmembrane regions (helical) follow at residues 33 to 53 (FGSLLGACLTIQIITGLFLAM), 77 to 98 (WTIRYLHANGASVFFLCLFIHV), 113 to 133 (WNVGIILLFSVMATAFMGYVL), and 178 to 198 (FFALHFVLPFVILALVMIHLL). Heme b contacts are provided by His83 and His97. Heme b-binding residues include His182 and His196. An a ubiquinone-binding site is contributed by His201. Transmembrane regions (helical) follow at residues 226-246 (TKDFLGLLLLILLLMVLTLFY), 288-308 (LGGVMALILSILILAIIPLLQ), 320-340 (LSQFLFWILVADLLTLTWIGG), and 347-367 (FITIGQVASILYFLLMVLIMP).

Belongs to the cytochrome b family. The cytochrome bc1 complex contains 11 subunits: 3 respiratory subunits (MT-CYB, CYC1 and UQCRFS1), 2 core proteins (UQCRC1 and UQCRC2) and 6 low-molecular weight proteins (UQCRH/QCR6, UQCRB/QCR7, UQCRQ/QCR8, UQCR10/QCR9, UQCR11/QCR10 and a cleavage product of UQCRFS1). This cytochrome bc1 complex then forms a dimer. It depends on heme b as a cofactor.

It localises to the mitochondrion inner membrane. Its function is as follows. Component of the ubiquinol-cytochrome c reductase complex (complex III or cytochrome b-c1 complex) that is part of the mitochondrial respiratory chain. The b-c1 complex mediates electron transfer from ubiquinol to cytochrome c. Contributes to the generation of a proton gradient across the mitochondrial membrane that is then used for ATP synthesis. The protein is Cytochrome b (MT-CYB) of Lepilemur edwardsi (Milne-Edwards's sportive lemur).